The primary structure comprises 234 residues: Sugar fermentation stimulation protein homolog (234 aa).

This sequence belongs to the SfsA family.

In Shewanella piezotolerans (strain WP3 / JCM 13877), this protein is Sugar fermentation stimulation protein homolog.